The chain runs to 543 residues: Pectate disaccharide-lyase (543 aa).

This sequence belongs to the polysaccharide lyase 2 family. Requires Cu cation as cofactor. Mn(2+) serves as cofactor. Ni(2+) is required as a cofactor.

The protein localises to the cytoplasm. It catalyses the reaction [(1-&gt;4)-alpha-D-galacturonosyl](n) = 4-(4-deoxy-alpha-D-galact-4-enuronosyl)-D-galacturonate + [(1-&gt;4)-alpha-D-galacturonosyl](n-2). Its pathway is glycan metabolism; pectin degradation. Functionally, catalyzes the formation of unsaturated digalacturonates from polygalacturonate or short oligogalacturonates. This is Pectate disaccharide-lyase (pelW) from Dickeya dadantii (strain 3937) (Erwinia chrysanthemi (strain 3937)).